A 147-amino-acid polypeptide reads, in one-letter code: Large ribosomal subunit protein bL9 (147 aa).

It belongs to the bacterial ribosomal protein bL9 family.

Functionally, binds to the 23S rRNA. This is Large ribosomal subunit protein bL9 from Shouchella clausii (strain KSM-K16) (Alkalihalobacillus clausii).